We begin with the raw amino-acid sequence, 637 residues long: Chaperone protein HtpG (637 aa).

The segment at 1–345 (MSHQETHGFQ…SNDLPLNVSR (345 aa)) is a; substrate-binding. The b stretch occupies residues 346–562 (EILQDNKVTR…EGEMSSQMIK (217 aa)). The tract at residues 563–637 (LMQAAGQPVP…VNQMLLKSVG (75 aa)) is c.

It belongs to the heat shock protein 90 family. In terms of assembly, homodimer.

It localises to the cytoplasm. Functionally, molecular chaperone. Has ATPase activity. The sequence is that of Chaperone protein HtpG from Shewanella amazonensis (strain ATCC BAA-1098 / SB2B).